Consider the following 209-residue polypeptide: ATP synthase subunit O, mitochondrial (209 aa).

This sequence belongs to the ATPase delta chain family. In terms of assembly, F-type ATPases have 2 components, CF(1) - the catalytic core - and CF(0) - the membrane proton channel. CF(1) has five subunits: alpha(3), beta(3), gamma(1), delta(1), epsilon(1). CF(0) has three main subunits: a, b and c.

It is found in the mitochondrion. The protein resides in the mitochondrion inner membrane. Mitochondrial membrane ATP synthase (F(1)F(0) ATP synthase or Complex V) produces ATP from ADP in the presence of a proton gradient across the membrane which is generated by electron transport complexes of the respiratory chain. F-type ATPases consist of two structural domains, F(1) - containing the extramembraneous catalytic core and F(0) - containing the membrane proton channel, linked together by a central stalk and a peripheral stalk. During catalysis, ATP synthesis in the catalytic domain of F(1) is coupled via a rotary mechanism of the central stalk subunits to proton translocation. Part of the complex F(0) domain and the peripheric stalk, which acts as a stator to hold the catalytic alpha(3)beta(3) subcomplex and subunit a/ATP6 static relative to the rotary elements. The chain is ATP synthase subunit O, mitochondrial from Drosophila melanogaster (Fruit fly).